The following is a 272-amino-acid chain: Deaminated glutathione amidase (272 aa).

The 253-residue stretch at 1 to 253 folds into the CN hydrolase domain; sequence MKPYLAAALQ…PGLAIAEINP (253 aa). The Proton acceptor role is filled by Glu43. Lys115 serves as the catalytic Proton donor. The active-site Nucleophile is Cys158.

The protein belongs to the carbon-nitrogen hydrolase superfamily. NIT1/NIT2 family.

The enzyme catalyses N-(4-oxoglutaryl)-L-cysteinylglycine + H2O = L-cysteinylglycine + 2-oxoglutarate. Hydrolyzes deaminated glutathione (dGSH, 2-oxoglutaramate) to alpha-ketoglutarate (alpha-KG) and cysteinylglycine (specific activity 7.77 umol/min/mg), hydrolyzes alpha-ketoglutaramate (a-KGM, specific activity 2.13 umol/min/mg), has no activity on glutathione or L-glutamine. May function as a metabolite repair enzyme. The sequence is that of Deaminated glutathione amidase from Synechocystis sp. (strain PCC 6803 / GT-S).